Consider the following 666-residue polypeptide: Non-receptor tyrosine-protein kinase TNK1 (666 aa).

The residue at position 96 (Ser96) is a Phosphoserine. Residues 116 to 383 (VRRGELLGSG…LEGLLQEAWL (268 aa)) enclose the Protein kinase domain. ATP contacts are provided by residues 122-130 (LGSGCFGVV) and Lys148. The active-site Proton acceptor is Asp245. Residue Ser255 is modified to Phosphoserine. The 61-residue stretch at 381–441 (AWLSEGRCVR…PASAVTLADL (61 aa)) folds into the SH3 domain. The segment at 442 to 589 (GGSPVTHPAH…VPSGGPLSDP (148 aa)) is disordered. Residues 457–473 (HGEKCRGGTDGDREKAT) are compositionally biased toward basic and acidic residues. Ser498 is modified (phosphoserine). Thr510 bears the Phosphothreonine mark. Ser515 carries the post-translational modification Phosphoserine. Positions 531-544 (DLPPRPPDLPPRPP) are enriched in pro residues. The residue at position 582 (Ser582) is a Phosphoserine.

This sequence belongs to the protein kinase superfamily. Tyr protein kinase family. Interacts with the SH3 domain of PLCG1 via its Pro-rich domain. Autophosphorylated on tyrosine residues. Expressed in whole embryo and all adult tissues examined including liver, kidney, heart, brain, skeletal muscle and intestine. Also detected in various myeloid- and lymphoid-derived cell lines.

Its subcellular location is the membrane. It localises to the cytoplasm. The catalysed reaction is L-tyrosyl-[protein] + ATP = O-phospho-L-tyrosyl-[protein] + ADP + H(+). In terms of biological role, may function in signaling pathways utilized broadly during fetal development and more selectively in adult tissues and in cells of the lymphohematopoietic system. Could specifically be involved in phospholipid signal transduction. Involved in negative regulation of cell growth. Has tumor suppressor properties. Plays a negative regulatory role in the Ras-MAPK pathway. This is Non-receptor tyrosine-protein kinase TNK1 from Mus musculus (Mouse).